A 361-amino-acid chain; its full sequence is Methionine import ATP-binding protein MetN (361 aa).

In terms of domain architecture, ABC transporter spans 22 to 257; that stretch reads VRLIDVKRRF…PQTDITRSLL (236 aa). 54–61 provides a ligand contact to ATP; sequence GRSGAGKS.

It belongs to the ABC transporter superfamily. Methionine importer (TC 3.A.1.24) family. In terms of assembly, the complex is composed of two ATP-binding proteins (MetN), two transmembrane proteins (MetI) and a solute-binding protein (MetQ).

It localises to the cell inner membrane. The catalysed reaction is L-methionine(out) + ATP + H2O = L-methionine(in) + ADP + phosphate + H(+). It carries out the reaction D-methionine(out) + ATP + H2O = D-methionine(in) + ADP + phosphate + H(+). Functionally, part of the ABC transporter complex MetNIQ involved in methionine import. Responsible for energy coupling to the transport system. The protein is Methionine import ATP-binding protein MetN of Rhizobium etli (strain ATCC 51251 / DSM 11541 / JCM 21823 / NBRC 15573 / CFN 42).